A 98-amino-acid chain; its full sequence is MSCYDLCRPCGPTPLANSCNEPCVRQCQDSRVIIEPSPVVVTLPGPILSSFPQNTAVGSTTSAAVGSILSEEGVPINSGGFNLSGLGGHYYSRRCLPC.

The residue at position 2 (serine 2) is an N-acetylserine.

Belongs to the avian keratin family. The avian keratins (F-ker, S-ker, C-ker and B-ker) are a complex mixture of very similar polypeptides.

The protein is Feather beta keratin of Cathartes aura (Turkey vulture).